Reading from the N-terminus, the 418-residue chain is MTLLALGINHKTAPVALRERVTFSPETLDKALESLLAQPMVQGGVVLSTCNRTELYLSVEEQDNLQEALIRWLCNYHGLNEEDLRKSLYWHQDNDAVSHLMRVASGLDSLVLGEPQILGQVKKAFADSSRGHLNVSELERMFQKSFSVAKRVRTETDIGASAVSVAFAACTLARQIFESLSSVTVLLVGAGETIELVARHLREHHVRKMVIANRTRERAQALAEEVGAEVIALSDIDERLKEADIIISSTASPLPIIGKGMVERALKARRNQPMLLVDIAVPRDVEPEVGKLANAYLYSVDDLQNIIQHNLAQRKAAAVQAESIVEQETSEFMAWLRAQSASETIREYRSQSEQVREELTAKALAALEQGGDAQEIMQDLARKLTNRLIHAPTKSLQQAARDGDDERLHILRNSLGLE.

Substrate contacts are provided by residues 49–52 (TCNR), serine 109, 114–116 (EPQ), and glutamine 120. Cysteine 50 functions as the Nucleophile in the catalytic mechanism. Residue 189–194 (GAGETI) coordinates NADP(+).

This sequence belongs to the glutamyl-tRNA reductase family. Homodimer.

It catalyses the reaction (S)-4-amino-5-oxopentanoate + tRNA(Glu) + NADP(+) = L-glutamyl-tRNA(Glu) + NADPH + H(+). It functions in the pathway porphyrin-containing compound metabolism; protoporphyrin-IX biosynthesis; 5-aminolevulinate from L-glutamyl-tRNA(Glu): step 1/2. Functionally, catalyzes the NADPH-dependent reduction of glutamyl-tRNA(Glu) to glutamate 1-semialdehyde (GSA). The polypeptide is Glutamyl-tRNA reductase (Klebsiella pneumoniae subsp. pneumoniae (strain ATCC 700721 / MGH 78578)).